The primary structure comprises 108 residues: Large ribosomal subunit protein bL21 (108 aa).

Belongs to the bacterial ribosomal protein bL21 family. In terms of assembly, part of the 50S ribosomal subunit. Contacts protein L20.

Its function is as follows. This protein binds to 23S rRNA in the presence of protein L20. The polypeptide is Large ribosomal subunit protein bL21 (Buchnera aphidicola subsp. Acyrthosiphon pisum (strain 5A)).